The primary structure comprises 261 residues: Proliferating cell nuclear antigen (261 aa).

Residues Lys-14, Lys-77, and Lys-80 each carry the N6-acetyllysine modification. Residues 61 to 80 mediate DNA binding; it reads RCDRNLAMGVNLTSMSKILK. Cysteines 135 and 162 form a disulfide. Lys-164 participates in a covalent cross-link: Glycyl lysine isopeptide (Lys-Gly) (interchain with G-Cter in SUMO2); alternate. Residue Lys-164 forms a Glycyl lysine isopeptide (Lys-Gly) (interchain with G-Cter in ubiquitin); alternate linkage. Tyr-211 carries the post-translational modification Phosphotyrosine; by EGFR. The residue at position 248 (Lys-248) is an N6-acetyllysine. Residue Lys-254 forms a Glycyl lysine isopeptide (Lys-Gly) (interchain with G-Cter in SUMO2) linkage.

Belongs to the PCNA family. In terms of assembly, homotrimer. Interacts with p300/EP300; the interaction occurs on chromatin in UV-irradiated damaged cells. Interacts with CREBBP (via transactivation domain and C-terminus); the interaction occurs on chromatin in UV-irradiated damaged cells. Directly interacts with POLD1, POLD3 and POLD4 subunits of the DNA polymerase delta complex, POLD3 being the major interacting partner; the interaction with POLD3 is inhibited by CDKN1A/p21(CIP1). Forms a complex with activator 1 heteropentamer in the presence of ATP. Interacts with EXO1, POLH, POLK, DNMT1, ERCC5, FEN1, CDC6 and POLDIP2. Interacts with POLB. Interacts with APEX2; this interaction is triggered by reactive oxygen species and increased by misincorporation of uracil in nuclear DNA. Forms a ternary complex with DNTTIP2 and core histone. Interacts with KCTD10 and PPP1R15A. Interacts with SMARCA5/SNF2H. Interacts with BAZ1B/WSTF; the interaction is direct and is required for BAZ1B/WSTF binding to replication foci during S phase. Interacts with HLTF and SHPRH. Interacts with NUDT15; this interaction is disrupted in response to UV irradiation and acetylation. Interacts with CDKN1A/p21(CIP1) and CDT1; interacts via their PIP-box which also recruits the DCX(DTL) complex. The interaction with CDKN1A inhibits POLD3 binding. Interacts with DDX11. Interacts with EGFR; positively regulates PCNA. Interacts with PARPBP. Interacts (when ubiquitinated) with SPRTN; leading to enhance RAD18-mediated PCNA ubiquitination. Interacts (when polyubiquitinated) with ZRANB3. Interacts with SMARCAD1. Interacts with CDKN1C. Interacts with PCLAF (via PIP-box). Interacts with RTEL1 (via PIP-box); the interaction is direct and essential for the suppression of telomere fragility. Interacts with FAM111A (via PIP-box); the interaction is direct and required for PCNA loading on chromatin binding. Interacts with LIG1. Interacts with SETMAR. Interacts with ANKRD17. Interacts with FBXO18/FBH1 (via PIP-box); the interaction recruits the DCX(DTL) complex and promotes ubiquitination and degradation of FBXO18/FBH1. Interacts with POLN. Interacts with SDE2 (via PIP-box); the interaction is direct and prevents ultraviolet light induced monoubiquitination. Component of the replisome complex composed of at least DONSON, MCM2, MCM7, PCNA and TICRR; interaction at least with PCNA occurs during DNA replication. Interacts with MAPK15; the interaction is chromatin binding dependent and prevents MDM2-mediated PCNA destruction by inhibiting the association of PCNA with MDM2. Interacts with PARP10 (via PIP-box). Interacts with DDI2. Interacts with HMCES (via PIP-box). Interacts with TRAIP (via PIP-box). Interacts with UHRF2. Interacts with ALKBH2; this interaction is enhanced during the S-phase of the cell cycle. Interacts with ATAD5; the interaction promotes USP1-mediated PCNA deubiquitination. Interacts (when phosphorylated) with GRB2. Interacts with ANG. Interacts with nuclear UNG; this interaction mediates UNG recruitment to S-phase replication foci. Interacts with ERCC6L2 (via an atypical PIP-box); this interaction facilitates cenrtomeric localization of ERCC6L2. Post-translationally, phosphorylated. Phosphorylation at Tyr-211 by EGFR stabilizes chromatin-associated PCNA. In terms of processing, acetylated by CREBBP and p300/EP300; preferentially acetylated by CREBBP on Lys-80, Lys-13 and Lys-14 and on Lys-77 by p300/EP300 upon loading on chromatin in response to UV irradiation. Lysine acetylation disrupts association with chromatin, hence promoting PCNA ubiquitination and proteasomal degradation in response to UV damage in a CREBBP- and EP300-dependent manner. Acetylation disrupts interaction with NUDT15 and promotes degradation. Ubiquitinated. Following DNA damage, can be either monoubiquitinated to stimulate direct bypass of DNA lesions by specialized DNA polymerases or polyubiquitinated to promote recombination-dependent DNA synthesis across DNA lesions by template switching mechanisms. Following induction of replication stress, monoubiquitinated by the UBE2B-RAD18 complex on Lys-164, leading to recruit translesion (TLS) polymerases, which are able to synthesize across DNA lesions in a potentially error-prone manner. An error-free pathway also exists and requires non-canonical polyubiquitination on Lys-164 through 'Lys-63' linkage of ubiquitin moieties by the E2 complex UBE2N-UBE2V2 and the E3 ligases, HLTF, RNF8 and SHPRH. This error-free pathway, also known as template switching, employs recombination mechanisms to synthesize across the lesion, using as a template the undamaged, newly synthesized strand of the sister chromatid. Monoubiquitination at Lys-164 also takes place in undamaged proliferating cells, and is mediated by the DCX(DTL) complex, leading to enhance PCNA-dependent translesion DNA synthesis. Sumoylated during S phase. Post-translationally, methylated on glutamate residues by ARMT1.

The protein localises to the nucleus. In terms of biological role, auxiliary protein of DNA polymerase delta and epsilon, is involved in the control of eukaryotic DNA replication by increasing the polymerase's processibility during elongation of the leading strand. Induces a robust stimulatory effect on the 3'-5' exonuclease and 3'-phosphodiesterase, but not apurinic-apyrimidinic (AP) endonuclease, APEX2 activities. Has to be loaded onto DNA in order to be able to stimulate APEX2. Plays a key role in DNA damage response (DDR) by being conveniently positioned at the replication fork to coordinate DNA replication with DNA repair and DNA damage tolerance pathways. Acts as a loading platform to recruit DDR proteins that allow completion of DNA replication after DNA damage and promote postreplication repair: Monoubiquitinated PCNA leads to recruitment of translesion (TLS) polymerases, while 'Lys-63'-linked polyubiquitination of PCNA is involved in error-free pathway and employs recombination mechanisms to synthesize across the lesion. This is Proliferating cell nuclear antigen (PCNA) from Cricetulus griseus (Chinese hamster).